Consider the following 491-residue polypeptide: Aspartyl/glutamyl-tRNA(Asn/Gln) amidotransferase subunit B (491 aa).

The protein belongs to the GatB/GatE family. GatB subfamily. In terms of assembly, heterotrimer of A, B and C subunits.

It carries out the reaction L-glutamyl-tRNA(Gln) + L-glutamine + ATP + H2O = L-glutaminyl-tRNA(Gln) + L-glutamate + ADP + phosphate + H(+). It catalyses the reaction L-aspartyl-tRNA(Asn) + L-glutamine + ATP + H2O = L-asparaginyl-tRNA(Asn) + L-glutamate + ADP + phosphate + 2 H(+). In terms of biological role, allows the formation of correctly charged Asn-tRNA(Asn) or Gln-tRNA(Gln) through the transamidation of misacylated Asp-tRNA(Asn) or Glu-tRNA(Gln) in organisms which lack either or both of asparaginyl-tRNA or glutaminyl-tRNA synthetases. The reaction takes place in the presence of glutamine and ATP through an activated phospho-Asp-tRNA(Asn) or phospho-Glu-tRNA(Gln). The chain is Aspartyl/glutamyl-tRNA(Asn/Gln) amidotransferase subunit B from Burkholderia cenocepacia (strain HI2424).